Here is a 156-residue protein sequence, read N- to C-terminus: Small ribosomal subunit protein uS7 (156 aa).

The protein belongs to the universal ribosomal protein uS7 family. As to quaternary structure, part of the 30S ribosomal subunit. Contacts proteins S9 and S11.

Functionally, one of the primary rRNA binding proteins, it binds directly to 16S rRNA where it nucleates assembly of the head domain of the 30S subunit. Is located at the subunit interface close to the decoding center, probably blocks exit of the E-site tRNA. The protein is Small ribosomal subunit protein uS7 of Mycoplasmopsis agalactiae (strain NCTC 10123 / CIP 59.7 / PG2) (Mycoplasma agalactiae).